We begin with the raw amino-acid sequence, 274 residues long: MTWADEVLAGHPFVVAHRGASAARPEHTLAAYDLALKEGADGVECDVRLTRDGHLVCVHDRRLDRTSTGAGLVSTMTLAQLRELEYGAWHDSWRPDGSHGDTSLLTLDALVSLVLDWHRPVKIFVETKHPVRYGSLVENKLLALLHRFGIAAPASADRSRAVVMSFSAAAVWRIRRAAPLLPTVLLGKTPRYLTSSAATAVGATAVGPSLPALKEYPQLVDRSAAQGRAVYCWNVDEYEDIDFCREVGVAWIGTHHPGRTKAWLEDGRANGTTR.

One can recognise a GP-PDE domain in the interval Pro12–Leu264. His17 (proton acceptor) is an active-site residue. Ca(2+)-binding residues include Glu44 and Asp46. His59 serves as the catalytic Proton donor. Residue Glu126 participates in Ca(2+) binding.

The protein belongs to the glycerophosphoryl diester phosphodiesterase family. Ca(2+) is required as a cofactor.

It catalyses the reaction a sn-glycero-3-phosphodiester + H2O = an alcohol + sn-glycerol 3-phosphate + H(+). Functionally, glycerophosphodiester phosphodiesterase hydrolyzes glycerophosphodiesters into glycerol-3-phosphate (G3P) and the corresponding alcohol. This is Probable glycerophosphodiester phosphodiesterase 1 (glpQ1) from Mycobacterium tuberculosis (strain CDC 1551 / Oshkosh).